The sequence spans 361 residues: Large-conductance mechanosensitive channel MscMJLR (361 aa).

A run of 5 helical transmembrane segments spans residues I20–I40, L65–L85, L89–F109, I137–I157, and L177–L197.

Belongs to the MscS (TC 1.A.23) family.

The protein localises to the cell membrane. In terms of biological role, large-conductance mechanosensitive channel that opens in response to stretch forces in the membrane lipid bilayer. Selective for cations. Rectifies with voltage. This chain is Large-conductance mechanosensitive channel MscMJLR, found in Methanocaldococcus jannaschii (strain ATCC 43067 / DSM 2661 / JAL-1 / JCM 10045 / NBRC 100440) (Methanococcus jannaschii).